The primary structure comprises 320 residues: uncharacterized protein (320 aa).

Residues 1–40 (MDHPSTSSLPRKKVKAGVKKAGKKTGKKTTGKKKTTPSAI) form a disordered region. Over residues 10–35 (PRKKVKAGVKKAGKKTGKKTTGKKKT) the composition is skewed to basic residues. The chain crosses the membrane as a helical span at residues 51–71 (LLVLLAVLSYLAALSLGLYIM). 4 N-linked (GlcNAc...) asparagine glycosylation sites follow: asparagine 92, asparagine 122, asparagine 154, and asparagine 167. A run of 2 helical transmembrane segments spans residues 186–206 (PLVH…AMTG) and 216–236 (MLVT…VTVL). A glycan (N-linked (GlcNAc...) asparagine) is linked at asparagine 247. Residues 272-292 (VQGALVAIVAVFYLTMGVVFV) traverse the membrane as a helical segment.

The protein localises to the membrane. The protein operates within secondary metabolite biosynthesis; terpenoid biosynthesis. Its function is as follows. Part of the gene cluster that mediates the biosynthesis of an ophiobolin family sesterterpenoid. This is an uncharacterized protein from Aspergillus terreus.